The chain runs to 510 residues: Xylose import ATP-binding protein XylG (510 aa).

2 ABC transporter domains span residues 5 to 242 (LEMK…VGRE) and 259 to 505 (LRVE…LRSE). ATP is bound at residue 37-44 (GENGSGKS).

This sequence belongs to the ABC transporter superfamily. Xylose importer (TC 3.A.1.2.4) family. The complex is composed of two ATP-binding proteins (XylG), two transmembrane proteins (XylH) and a solute-binding protein (XylF).

It localises to the cell inner membrane. It catalyses the reaction D-xylose(out) + ATP + H2O = D-xylose(in) + ADP + phosphate + H(+). Part of the ABC transporter complex XylFGH involved in xylose import. Responsible for energy coupling to the transport system. This chain is Xylose import ATP-binding protein XylG, found in Yersinia pestis.